The following is a 183-amino-acid chain: Small ribosomal subunit protein uS4 (183 aa).

In terms of domain architecture, S4 RNA-binding spans 106–168 (RRLETLVYKK…ETSPFTDENH (63 aa)). A disordered region spans residues 158–183 (NETSPFTDENHPLRMEMSGTKEEENE). Residues 165-183 (DENHPLRMEMSGTKEEENE) are compositionally biased toward basic and acidic residues.

Belongs to the universal ribosomal protein uS4 family. Part of the 30S ribosomal subunit. Contacts protein S5. The interaction surface between S4 and S5 is involved in control of translational fidelity.

In terms of biological role, one of the primary rRNA binding proteins, it binds directly to 16S rRNA where it nucleates assembly of the body of the 30S subunit. Its function is as follows. With S5 and S12 plays an important role in translational accuracy. This Picrophilus torridus (strain ATCC 700027 / DSM 9790 / JCM 10055 / NBRC 100828 / KAW 2/3) protein is Small ribosomal subunit protein uS4.